Reading from the N-terminus, the 296-residue chain is Phosphatidylcholine:diacylglycerol cholinephosphotransferase 2 (296 aa).

Helical transmembrane passes span 83-103 (HWIP…EYTF), 136-156 (VLAA…GCTW), 165-182 (TIAA…GYST), 198-218 (PVGN…SMIA), and 250-270 (GHYT…DSLA). Active-site residues include His-211, His-251, and Asp-255.

Belongs to the phosphatidylcholine:diacylglycerol cholinephosphotransferase family.

Its subcellular location is the membrane. Functionally, functions as a phosphatidylcholine:diacylglycerol cholinephosphotransferase that catalyzes the transfer of the phosphocholine headgroup from phosphatidylcholine (PC) to diacylglycerol, a major reaction for the transfer of 18:1 into phosphatidylcholine for desaturation and also for the reverse transfer of 18:2 and 18:3 into the triacylglycerols synthesis pathway. This Arabidopsis thaliana (Mouse-ear cress) protein is Phosphatidylcholine:diacylglycerol cholinephosphotransferase 2.